The chain runs to 125 residues: Large ribosomal subunit protein uL22c (125 aa).

The protein belongs to the universal ribosomal protein uL22 family. As to quaternary structure, part of the 50S ribosomal subunit.

Its subcellular location is the plastid. The protein localises to the chloroplast. Its function is as follows. This protein binds specifically to 23S rRNA. Functionally, the globular domain of the protein is located near the polypeptide exit tunnel on the outside of the subunit, while an extended beta-hairpin is found that lines the wall of the exit tunnel in the center of the 70S ribosome. This chain is Large ribosomal subunit protein uL22c (rpl22), found in Nymphaea alba (White water-lily).